A 292-amino-acid chain; its full sequence is Acetyl-coenzyme A carboxylase carboxyl transferase subunit beta (292 aa).

One can recognise a CoA carboxyltransferase N-terminal domain in the interval 29–292 (LWVKCSECGQ…HGVKELVQTN (264 aa)). Zn(2+)-binding residues include Cys33, Cys36, Cys52, and Cys55. Residues 33–55 (CSECGQVAYRKDLISNFNVCSNC) form a C4-type zinc finger.

The protein belongs to the AccD/PCCB family. As to quaternary structure, acetyl-CoA carboxylase is a heterohexamer composed of biotin carboxyl carrier protein (AccB), biotin carboxylase (AccC) and two subunits each of ACCase subunit alpha (AccA) and ACCase subunit beta (AccD). Zn(2+) serves as cofactor.

It localises to the cytoplasm. It carries out the reaction N(6)-carboxybiotinyl-L-lysyl-[protein] + acetyl-CoA = N(6)-biotinyl-L-lysyl-[protein] + malonyl-CoA. Its pathway is lipid metabolism; malonyl-CoA biosynthesis; malonyl-CoA from acetyl-CoA: step 1/1. Functionally, component of the acetyl coenzyme A carboxylase (ACC) complex. Biotin carboxylase (BC) catalyzes the carboxylation of biotin on its carrier protein (BCCP) and then the CO(2) group is transferred by the transcarboxylase to acetyl-CoA to form malonyl-CoA. This chain is Acetyl-coenzyme A carboxylase carboxyl transferase subunit beta, found in Prochlorococcus marinus subsp. pastoris (strain CCMP1986 / NIES-2087 / MED4).